The sequence spans 629 residues: Chaperone protein HtpG (629 aa).

Residues 1–336 (MSSTENNGTA…TEDLSLNVSR (336 aa)) form an a; substrate-binding region. A b region spans residues 337-549 (EMVQSSPVMA…KDAIDSQLER (213 aa)). Positions 550–629 (MMKMMNTPMP…ELIEAATLTR (80 aa)) are c.

This sequence belongs to the heat shock protein 90 family. Homodimer.

It is found in the cytoplasm. Functionally, molecular chaperone. Has ATPase activity. This chain is Chaperone protein HtpG, found in Chlorobium chlorochromatii (strain CaD3).